Here is a 282-residue protein sequence, read N- to C-terminus: Elongation factor Ts (282 aa).

The segment at 79-82 is involved in Mg(2+) ion dislocation from EF-Tu; sequence TDFV.

This sequence belongs to the EF-Ts family.

The protein localises to the cytoplasm. Its function is as follows. Associates with the EF-Tu.GDP complex and induces the exchange of GDP to GTP. It remains bound to the aminoacyl-tRNA.EF-Tu.GTP complex up to the GTP hydrolysis stage on the ribosome. This Shewanella loihica (strain ATCC BAA-1088 / PV-4) protein is Elongation factor Ts.